Here is a 198-residue protein sequence, read N- to C-terminus: Nucleoside triphosphate pyrophosphatase (198 aa).

The active-site Proton acceptor is the Asp-72.

Belongs to the Maf family. It depends on a divalent metal cation as a cofactor.

The protein resides in the cytoplasm. It carries out the reaction a ribonucleoside 5'-triphosphate + H2O = a ribonucleoside 5'-phosphate + diphosphate + H(+). It catalyses the reaction a 2'-deoxyribonucleoside 5'-triphosphate + H2O = a 2'-deoxyribonucleoside 5'-phosphate + diphosphate + H(+). Its function is as follows. Nucleoside triphosphate pyrophosphatase. May have a dual role in cell division arrest and in preventing the incorporation of modified nucleotides into cellular nucleic acids. This chain is Nucleoside triphosphate pyrophosphatase, found in Corynebacterium aurimucosum (strain ATCC 700975 / DSM 44827 / CIP 107346 / CN-1) (Corynebacterium nigricans).